Consider the following 192-residue polypeptide: Transcription termination/antitermination protein NusG (192 aa).

The KOW domain occupies 140 to 168 (VGEIVTVTDGPFETFMGTVEEIDQEKNRL).

Belongs to the NusG family.

In terms of biological role, participates in transcription elongation, termination and antitermination. This is Transcription termination/antitermination protein NusG from Rickettsia conorii (strain ATCC VR-613 / Malish 7).